A 177-amino-acid polypeptide reads, in one-letter code: ATP synthase subunit delta (177 aa).

Belongs to the ATPase delta chain family. F-type ATPases have 2 components, F(1) - the catalytic core - and F(0) - the membrane proton channel. F(1) has five subunits: alpha(3), beta(3), gamma(1), delta(1), epsilon(1). F(0) has three main subunits: a(1), b(2) and c(10-14). The alpha and beta chains form an alternating ring which encloses part of the gamma chain. F(1) is attached to F(0) by a central stalk formed by the gamma and epsilon chains, while a peripheral stalk is formed by the delta and b chains.

The protein localises to the cell inner membrane. F(1)F(0) ATP synthase produces ATP from ADP in the presence of a proton or sodium gradient. F-type ATPases consist of two structural domains, F(1) containing the extramembraneous catalytic core and F(0) containing the membrane proton channel, linked together by a central stalk and a peripheral stalk. During catalysis, ATP synthesis in the catalytic domain of F(1) is coupled via a rotary mechanism of the central stalk subunits to proton translocation. Its function is as follows. This protein is part of the stalk that links CF(0) to CF(1). It either transmits conformational changes from CF(0) to CF(1) or is implicated in proton conduction. The chain is ATP synthase subunit delta from Shewanella sp. (strain ANA-3).